A 158-amino-acid chain; its full sequence is Glycosyl-phosphatidylinositol-anchored molecule-like protein (158 aa).

The N-terminal stretch at 1–17 is a signal peptide; the sequence is MLLFALLLAMELPLVAA. The 106-residue stretch at 29–134 folds into the UPAR/Ly6 domain; that stretch reads LRCHDCAVIN…DEVTEEELPE (106 aa). Intrachain disulfides connect C31-C55, C34-C42, C48-C73, C77-C104, and C105-C110.

The protein localises to the cell membrane. May play a role in the apoptotic pathway or cell-cycle regulation induced by p53/TP53 after DNA damage. This is Glycosyl-phosphatidylinositol-anchored molecule-like protein (GML) from Homo sapiens (Human).